Here is a 425-residue protein sequence, read N- to C-terminus: Cytokine receptor-like factor 1 (425 aa).

A signal peptide spans 1–33; the sequence is MPAGRPGPVAQSARRPPRPLSSLWSPLLLCVLG. Positions 35–134 constitute an Ig-like C2-type domain; that stretch reads PRGGSGAHTA…SILAGSCLYV (100 aa). 3 N-linked (GlcNAc...) asparagine glycosylation sites follow: Asn-95, Asn-107, and Asn-143. Fibronectin type-III domains follow at residues 140-235 and 240-344; these read KPFN…VLDV and PPPD…TPRS. A disulfide bridge links Cys-146 with Cys-156. Residue Asn-171 is glycosylated (N-linked (GlcNAc...) asparagine). An intrachain disulfide couples Cys-187 to Cys-198. Ser-222 is subject to Phosphoserine. Residue Asn-295 is glycosylated (N-linked (GlcNAc...) asparagine). The short motif at 330-334 is the WSXWS motif element; it reads WSEWS. A disordered region spans residues 335 to 366; the sequence is HPTAASTPRSERPGPGGGVCEPRGGEPSSGPV. N-linked (GlcNAc...) asparagine glycosylation is present at Asn-385. The interval 402–425 is disordered; the sequence is HKTRNQDEGILPSGRRGAARGPAG. Low complexity predominate over residues 415-425; it reads GRRGAARGPAG.

This sequence belongs to the type I cytokine receptor family. Type 3 subfamily. As to quaternary structure, forms covalent di- and tetramers. Forms a heteromeric complex with cardiotrophin-like cytokine CLCF1/CLC; the CRLF1-CLCF1 complex is a ligand for the ciliary neurotrophic factor receptor/CNTFR. The CRLF1-CLCF1 heterodimer, as well as tripartite signaling complex formed by CRLF1, CLCF1 and CNTFR bind SORL1 (via N-terminal ectodomain); within this complex, the interaction is mediated predominantly by the CRLF1 moiety. As to expression, widely expressed in the embryo. Not detected in the brain of adult mice.

It localises to the secreted. In terms of biological role, in complex with CLCF1, forms a heterodimeric neurotropic cytokine that plays a crucial role during neuronal development. Plays a role in the initiation and/or maintenance of suckling in neonatal mice. May also play a regulatory role in the immune system. The protein is Cytokine receptor-like factor 1 (Crlf1) of Mus musculus (Mouse).